An 890-amino-acid polypeptide reads, in one-letter code: MQVEWSWFQQFQLEGVLLERWLLQLASAVVALLPIGLAIRWSRSLDPSPETASTVRLEGWRYSLTLLLAIALQLVSLAVINGLILQAIDDSMNLASGWQVSIHQSQLPVLTLISLVAVMQPRLRRLLPWFVSTAVVLIAARAWGVWALAWSIPLSGLQEPFLKADVSFALGRFAALQLLIALLSSGALFCLGNGLQTLLTRPPALSDWSCAVPGPRNRRLLMLMAALVLVLLAGQCWLSRHALLWHQHGIVAGAGWLQQAVTEPFRMLLTVELLLLALAVMLPSSLLLRRRLLGVLAVTLALGFSLTPLSRWLILRPQELSLQTPYLEEAIRSTRHAFQLDRITRGSYKPEPSLTKADIVQGASTLSNLRLWDSAPLLETNRQLQQLRVYYRFPQASVDRYPLSPQGDTPQQVILSARELDQSALPRRSKTWLNRHFVFTHGYGFTVSPVNTRGDDGLPEYFISDLGTDTRIQGNRELGIEREDVERAIPVEDAALYFGMLRSPYAVAPTRVDEFDYPEGDLNVYTHYRGSAGVPIGHWLQRVAAATYLGEPRLLTAGSIDHSSKLLIRREVRDRVQAIAPFLDLRGDPYLISIPQSGQPTSASNQHQYWVVEGFTHSSTYPYSSAVSNSDSDRYLRNSVKAVVDAYNGSVQLFISEPDDPLIRGWARVFPQLFQPLDAMPSSIRDHLRVPKELFDVQVKQLQRYHVEDPRVFYSGDDVWQVPLEVYDGEQISVRPYHITAQVQDRSNSEFLLLQPLTPLARPNLTAWLAARNDGKHYGDLVQIDFPKDTPILGPEQVQALINQDPEISKVFGLWDRGGSQVVQGNLLVVPVGQCLLYVEPVYLRASKGGLPSLTRIVVSDGRTIAMADTLPGAIDRLMQKTLPPVATGS.

8 helical membrane passes run 21 to 41 (WLLQ…AIRW), 64 to 84 (LTLL…NGLI), 98 to 118 (WQVS…LVAV), 134 to 154 (AVVL…SIPL), 173 to 193 (FAAL…CLGN), 219 to 239 (RLLM…CWLS), 268 to 288 (LLTV…SLLL), and 295 to 315 (VLAV…WLIL).

The protein belongs to the UPF0182 family.

It localises to the cell membrane. This Parasynechococcus marenigrum (strain WH8102) protein is UPF0182 protein SYNW1212.